The primary structure comprises 159 residues: 2-C-methyl-D-erythritol 2,4-cyclodiphosphate synthase (159 aa).

The a divalent metal cation site is built by Asp-10 and His-12. Residues 10 to 12 (DVH) and 37 to 38 (HS) contribute to the 4-CDP-2-C-methyl-D-erythritol 2-phosphate site. Position 45 (His-45) interacts with a divalent metal cation. Residues 59–61 (DIG), 64–68 (FPDTD), 103–109 (AQAPKML), 135–138 (TTTE), Phe-142, and Arg-145 contribute to the 4-CDP-2-C-methyl-D-erythritol 2-phosphate site.

This sequence belongs to the IspF family. Homotrimer. A divalent metal cation is required as a cofactor.

It carries out the reaction 4-CDP-2-C-methyl-D-erythritol 2-phosphate = 2-C-methyl-D-erythritol 2,4-cyclic diphosphate + CMP. It functions in the pathway isoprenoid biosynthesis; isopentenyl diphosphate biosynthesis via DXP pathway; isopentenyl diphosphate from 1-deoxy-D-xylulose 5-phosphate: step 4/6. Its function is as follows. Involved in the biosynthesis of isopentenyl diphosphate (IPP) and dimethylallyl diphosphate (DMAPP), two major building blocks of isoprenoid compounds. Catalyzes the conversion of 4-diphosphocytidyl-2-C-methyl-D-erythritol 2-phosphate (CDP-ME2P) to 2-C-methyl-D-erythritol 2,4-cyclodiphosphate (ME-CPP) with a corresponding release of cytidine 5-monophosphate (CMP). The chain is 2-C-methyl-D-erythritol 2,4-cyclodiphosphate synthase from Francisella philomiragia subsp. philomiragia (strain ATCC 25017 / CCUG 19701 / FSC 153 / O#319-036).